The chain runs to 345 residues: MSNRLSYWEYLHQELKLNADIQSQLVVLDLFAGCGGFSLGFKAAGFQTIGYEMLADAAATYTRNLQDPCYCQTLEIGQDLCNHPDVIIGGPPCQPFSVGGLQKGPRDSRDGLPIFIDAIARYQPEIAIFENVRGMLYKNRQYLEKIVAELERLNYRVDIKLINAVNYGVPQKRERLFVVAYQTAWNWPEAETLAIPYTAGDAIYDTASTIPIGAKFLTPSMLEYIGRYEAKSKCVKPRDIYLDIPCRTLTCRNLSGATSDMLRLLLPDGRRRRLTVREAARLQSFPDWFELVGSENSQFNQIGNAVPPLLAKAIAKSVKMTLENKPSRPTDYFSPFPQQLKLPFA.

The 301-residue stretch at 25–325 (LVVLDLFAGC…KSVKMTLENK (301 aa)) folds into the SAM-dependent MTase C5-type domain. Cys-93 is a catalytic residue.

It belongs to the class I-like SAM-binding methyltransferase superfamily. C5-methyltransferase family.

The enzyme catalyses a 2'-deoxycytidine in DNA + S-adenosyl-L-methionine = a 5-methyl-2'-deoxycytidine in DNA + S-adenosyl-L-homocysteine + H(+). A methylase, recognizes the double-stranded sequence 5'-CTGCAG-3', methylates C-4 on both strands, and protects the DNA from cleavage by the AplI endonuclease. In Arthrospira platensis (strain NIES-39 / UTEX 3086 / IAM M-135) (Spirulina platensis), this protein is Type II methyltransferase M.AplI (aplIM).